The following is a 395-amino-acid chain: MTAPASSPASPYDPLDIAVELIRCPSVTPDEGGALGVLEKWLAPLGFKCERMRFSAEGTPDVDNLYARLGSGHPHFCFAGHTDVVPVGQADAWSVDPFAADIKDGRLYGRGAADMKSAVASFVAAAERISREGFQGSISLLITGDEEGPSINGTRKMLEKLAARNETIDHCIVGEPTSVEKLGDMIKVGRRGSINGWLTVQGTQGHVAYPHLADNPVPRLLEMLRRLDAHVLDEGTDHFQPSNLEVTTVDIGNTATNVIPGSARATVNIRFNDLHTGASLDKWMRGVLDAVTAEMGGSYSFKTSVSGEAFITEPGAFSALIAEAAKEVTGITPELSTTGGTSDARFIRAYAPVVEIGLPNATMHKADENTGVSEIRQLADIYETVLRGYFAGRAS.

A Zn(2+)-binding site is contributed by His-81. The active site involves Asp-83. Residue Asp-114 coordinates Zn(2+). Residue Glu-146 is the Proton acceptor of the active site. Residues Glu-147, Glu-175, and His-364 each contribute to the Zn(2+) site.

Belongs to the peptidase M20A family. DapE subfamily. Homodimer. Zn(2+) is required as a cofactor. It depends on Co(2+) as a cofactor.

It carries out the reaction N-succinyl-(2S,6S)-2,6-diaminopimelate + H2O = (2S,6S)-2,6-diaminopimelate + succinate. The protein operates within amino-acid biosynthesis; L-lysine biosynthesis via DAP pathway; LL-2,6-diaminopimelate from (S)-tetrahydrodipicolinate (succinylase route): step 3/3. Its function is as follows. Catalyzes the hydrolysis of N-succinyl-L,L-diaminopimelic acid (SDAP), forming succinate and LL-2,6-diaminopimelate (DAP), an intermediate involved in the bacterial biosynthesis of lysine and meso-diaminopimelic acid, an essential component of bacterial cell walls. The sequence is that of Succinyl-diaminopimelate desuccinylase from Parvibaculum lavamentivorans (strain DS-1 / DSM 13023 / NCIMB 13966).